The chain runs to 556 residues: Trigger factor (556 aa).

In terms of domain architecture, PPIase FKBP-type spans 169–255 (GDVVVIDFAA…LREIKAKELP (87 aa)). Residues 438–452 (VDSEGNPTQAPTSLA) show a composition bias toward polar residues. Residues 438–556 (VDSEGNPTQA…KPSKKDKKGK (119 aa)) are disordered. Over residues 461–472 (PEAEFEADEPEA) the composition is skewed to acidic residues. 2 stretches are compositionally biased toward low complexity: residues 486-503 (ETATGAETDGEAAAAEAE) and 511-526 (EASPAETVSASAAEAT).

The protein belongs to the FKBP-type PPIase family. Tig subfamily.

It localises to the cytoplasm. The catalysed reaction is [protein]-peptidylproline (omega=180) = [protein]-peptidylproline (omega=0). Functionally, involved in protein export. Acts as a chaperone by maintaining the newly synthesized protein in an open conformation. Functions as a peptidyl-prolyl cis-trans isomerase. The chain is Trigger factor from Synechococcus sp. (strain JA-2-3B'a(2-13)) (Cyanobacteria bacterium Yellowstone B-Prime).